A 1241-amino-acid chain; its full sequence is Interphotoreceptor matrix proteoglycan 2 (1241 aa).

An N-terminal signal peptide occupies residues 1–22 (MIMFPLFGKISLGILIFVLIEG). Residues 23 to 1099 (DFPSLTAQTY…KHCEEFVSEP (1077 aa)) lie on the Extracellular side of the membrane. N-linked (GlcNAc...) asparagine glycosylation occurs at asparagine 154. The interval 180-223 (ELSSPVPVGDTSTLGDTTLSVPHPEVDAYEGASESSLERPEESI) is disordered. The span at 189–199 (DTSTLGDTTLS) shows a compositional bias: polar residues. Threonine 190 and threonine 192 each carry an O-linked (GalNAc...) threonine glycan. In terms of domain architecture, SEA 1 spans 239–353 (GEQIAEFSIH…KPTVVYTISN (115 aa)). A hyaluronan-binding motif involved in chondroitin sulfate A-binding region spans residues 259–267 (QDSSSFHHQ). N-linked (GlcNAc...) asparagine glycosylation is found at asparagine 301, asparagine 320, and asparagine 370. 2 O-linked (GalNAc...) threonine glycosylation sites follow: threonine 544 and threonine 556. The span at 660-678 (QISKHSKYEHDDRSTHFPE) shows a compositional bias: basic and acidic residues. Residues 660–684 (QISKHSKYEHDDRSTHFPEEEPLSG) form a disordered region. Residues 897-1010 (GALVVFFSLR…YSLDVESGDE (114 aa)) enclose the SEA 2 domain. Asparagine 942 and asparagine 956 each carry an N-linked (GlcNAc...) asparagine glycan. 2 consecutive EGF-like domains span residues 1010–1051 (EANP…RPCQ) and 1052–1093 (SLCD…KHCE). Cystine bridges form between cysteine 1014-cysteine 1025, cysteine 1019-cysteine 1036, cysteine 1038-cysteine 1050, cysteine 1054-cysteine 1067, cysteine 1061-cysteine 1077, and cysteine 1079-cysteine 1092. Residues 1080 to 1088 (RVGENWWYR) are hyaluronan-binding motif involved in chondroitin sulfate C-binding. A helical transmembrane segment spans residues 1100–1120 (VIIGITIASVVGLLVIFSAII). The Cytoplasmic portion of the chain corresponds to 1121–1241 (YFFIRTLQAH…FVREQQVEEV (121 aa)). Residues 1125 to 1133 (RTLQAHHDR) form a hyaluronan-binding motif involved in chondroitin sulfate A- and C-binding region. Positions 1136–1145 (RESPFSGSSR) are hyaluronan-binding motif involved in chondroitin sulfate C-binding. A hyaluronan-binding motif involved in chondroitin sulfate A- and C-binding motif region spans residues 1210–1218 (REEIQERMR).

Post-translationally, highly glycosylated (N- and O-linked carbohydrates). Expressed in the retina (at protein level). Expressed by photoreceptors of the interphotoreceptor matrix (IPM) surrounding both rods and cones (at protein level). IPM occupies the subretinal space between the apices of the retinal pigment epithelium and the neural retina. Expressed in the pineal gland (at protein level).

The protein resides in the photoreceptor outer segment membrane. It is found in the photoreceptor inner segment membrane. It localises to the secreted. Its subcellular location is the extracellular space. The protein localises to the extracellular matrix. The protein resides in the interphotoreceptor matrix. In terms of biological role, chondroitin sulfate- and hyaluronan-binding proteoglycan involved in the organization of interphotoreceptor matrix; may participate in the maturation and maintenance of the light-sensitive photoreceptor outer segment. Binds heparin. This chain is Interphotoreceptor matrix proteoglycan 2 (IMPG2), found in Homo sapiens (Human).